Here is a 141-residue protein sequence, read N- to C-terminus: Hemoglobin subunit alpha-1/2 (141 aa).

The Globin domain maps to 1 to 141; the sequence is VLSPADKTNV…VSTVLTSKYR (141 aa). Ser-3 bears the Phosphoserine mark. The residue at position 7 (Lys-7) is an N6-succinyllysine. Thr-8 carries the post-translational modification Phosphothreonine. Lys-11 is modified (N6-succinyllysine). N6-acetyllysine; alternate is present on Lys-16. Residue Lys-16 is modified to N6-succinyllysine; alternate. The residue at position 24 (Tyr-24) is a Phosphotyrosine. Phosphoserine is present on Ser-35. Position 40 is an N6-succinyllysine (Lys-40). Ser-49 bears the Phosphoserine mark. His-58 is a binding site for O2. His-87 serves as a coordination point for heme b. Ser-102 is modified (phosphoserine). Thr-108 bears the Phosphothreonine mark. At Ser-124 the chain carries Phosphoserine. Phosphothreonine occurs at positions 134 and 137. Phosphoserine is present on Ser-138.

Belongs to the globin family. As to quaternary structure, heterotetramer of two alpha chains and two beta chains. As to expression, red blood cells.

Functionally, involved in oxygen transport from the lung to the various peripheral tissues. The polypeptide is Hemoglobin subunit alpha-1/2 (Mustela putorius (European polecat)).